The chain runs to 264 residues: Somatomedin-B and thrombospondin type-1 domain-containing protein (264 aa).

A signal peptide spans 1–20; sequence MKTLWMVLCALARLWPGALA. The SMB domain occupies 24–75; sequence EAGRCCPGRDPACFARGWRLDRVYGTCFCDQACRLTGDCCFDYDRACPARPC. 7 cysteine pairs are disulfide-bonded: C28-C36, C28-C52, C36-C70, C50-C52, C50-C63, C56-C62, and C63-C70. A TSP type-1 domain is found at 74 to 125; sequence PCFVGEWSPWSGCAGQCQPTTRVRRRSVRQEPLNGGAPCPPLEERAGCLEYS. N227 is a glycosylation site (N-linked (GlcNAc...) asparagine).

The protein belongs to the thrombospondin family.

Its subcellular location is the secreted. The protein resides in the extracellular space. It is found in the extracellular matrix. In Mus musculus (Mouse), this protein is Somatomedin-B and thrombospondin type-1 domain-containing protein (Sbspon).